The chain runs to 427 residues: Mitogen-activated protein kinase 8B (427 aa).

Positions 26–321 (YQNLRPIGSG…VDEALQHPYI (296 aa)) constitute a Protein kinase domain. ATP-binding positions include 33-40 (GSGAQGIV) and Lys55. The Proton acceptor role is filled by Asp151. Position 183 is a phosphothreonine (Thr183). Positions 183–185 (TPY) match the TXY motif. A Phosphotyrosine modification is found at Tyr185. A disordered region spans residues 372–427 (IRGQPSPIGAAVINGSPQPSSSSSINDVSSMSTEPTVASDTDSSLEASAGPLSCCR). The segment covering 387-403 (SPQPSSSSSINDVSSMS) has biased composition (low complexity). Polar residues predominate over residues 404-417 (TEPTVASDTDSSLE).

Belongs to the protein kinase superfamily. CMGC Ser/Thr protein kinase family. MAP kinase subfamily. The cofactor is Mg(2+). Dually phosphorylated on Thr-183 and Tyr-185, which activates the enzyme. As to expression, expressed at high levels in the ovary and at lower levels in brain, gill, heart, spleen, liver, kidney, muscle, bladder and gut.

It catalyses the reaction L-seryl-[protein] + ATP = O-phospho-L-seryl-[protein] + ADP + H(+). The catalysed reaction is L-threonyl-[protein] + ATP = O-phospho-L-threonyl-[protein] + ADP + H(+). Activated by threonine and tyrosine phosphorylation. Responds to activation by environmental stress and pro-inflammatory cytokines by phosphorylating a number of transcription factors, primarily components of AP-1 such as c-Jun and ATF2 and thus regulates AP-1 transcriptional activity. May play a role in the regulation of the circadian clock. The protein is Mitogen-activated protein kinase 8B (mapk8b) of Cyprinus carpio (Common carp).